Reading from the N-terminus, the 532-residue chain is tRNA-2-methylthio-N(6)-dimethylallyladenosine synthase (532 aa).

Residues 1–21 (MTSTVAHGAGSAGPADDVEPM) are disordered. The MTTase N-terminal domain occupies 24–140 (RTYQVRTYGC…LPALLDRARH (117 aa)). Residues Cys33, Cys69, Cys103, Cys177, Cys181, and Cys184 each contribute to the [4Fe-4S] cluster site. The region spanning 163–399 (RESAYAAWVS…VELQEQISLE (237 aa)) is the Radical SAM core domain. The 69-residue stretch at 402 to 470 (RAIVGQRVEL…PHHLIADGGI (69 aa)) folds into the TRAM domain. The tract at residues 510-532 (TSCGSAGGCGSADGAGSSAGDPQ) is disordered. Low complexity predominate over residues 523–532 (GAGSSAGDPQ).

The protein belongs to the methylthiotransferase family. MiaB subfamily. Monomer. [4Fe-4S] cluster serves as cofactor.

It is found in the cytoplasm. It catalyses the reaction N(6)-dimethylallyladenosine(37) in tRNA + (sulfur carrier)-SH + AH2 + 2 S-adenosyl-L-methionine = 2-methylsulfanyl-N(6)-dimethylallyladenosine(37) in tRNA + (sulfur carrier)-H + 5'-deoxyadenosine + L-methionine + A + S-adenosyl-L-homocysteine + 2 H(+). Catalyzes the methylthiolation of N6-(dimethylallyl)adenosine (i(6)A), leading to the formation of 2-methylthio-N6-(dimethylallyl)adenosine (ms(2)i(6)A) at position 37 in tRNAs that read codons beginning with uridine. This is tRNA-2-methylthio-N(6)-dimethylallyladenosine synthase from Mycobacterium ulcerans (strain Agy99).